The following is a 63-amino-acid chain: Large ribosomal subunit protein uL30 (63 aa).

It belongs to the universal ribosomal protein uL30 family. As to quaternary structure, part of the 50S ribosomal subunit.

The polypeptide is Large ribosomal subunit protein uL30 (Xylella fastidiosa (strain 9a5c)).